Here is a 602-residue protein sequence, read N- to C-terminus: Isocitrate dehydrogenase kinase/phosphatase (602 aa).

ATP contacts are provided by residues 327-333 and K348; that span reads APGIKGM. The active site involves D383.

Belongs to the AceK family.

It is found in the cytoplasm. The enzyme catalyses L-seryl-[isocitrate dehydrogenase] + ATP = O-phospho-L-seryl-[isocitrate dehydrogenase] + ADP + H(+). Functionally, bifunctional enzyme which can phosphorylate or dephosphorylate isocitrate dehydrogenase (IDH) on a specific serine residue. This is a regulatory mechanism which enables bacteria to bypass the Krebs cycle via the glyoxylate shunt in response to the source of carbon. When bacteria are grown on glucose, IDH is fully active and unphosphorylated, but when grown on acetate or ethanol, the activity of IDH declines drastically concomitant with its phosphorylation. The polypeptide is Isocitrate dehydrogenase kinase/phosphatase (Paraburkholderia phymatum (strain DSM 17167 / CIP 108236 / LMG 21445 / STM815) (Burkholderia phymatum)).